Here is a 104-residue protein sequence, read N- to C-terminus: MVNFKKTYVLKLYVAGNTPNSVRALKTLKNILEDEFKGVYALKVIDVLKNPQLAEEDKILATPTLSKILPPPVRKIIGDLSDREKVLIGLDLLYEEIRERESEL.

This sequence belongs to the KaiB family. The KaiABC complex composition changes during the circadian cycle to control KaiC phosphorylation. Complexes KaiC(6), KaiA(2-4):KaiC(6), KaiB(6):KaiC(6) and KaiC(6):KaiB(6):KaiA(12) are among the most important forms, many form cooperatively. Undergoes a major conformational rearrangment; in the free state forms homotetramers as a dimer of dimers. When bound to the CI domain of KaiC switches to a monomeric thioredoxin-fold (KaiB(fs)). KaiB(fs) binds CikA, leading it to dephosphorylate phospho-RpaA.

Key component of the KaiABC oscillator complex, which constitutes the main circadian regulator in cyanobacteria. Complex composition changes during the circadian cycle to control KaiC phosphorylation. KaiA stimulates KaiC autophosphorylation, while KaiB sequesters KaiA, leading to KaiC autodephosphorylation. Phospho-Ser-431 KaiC accumulation triggers binding of KaiB to form the KaiB(6):KaiC(6) complex, leading to changes in output regulators CikA and SasA. KaiB switches to a thioredoxin-like fold (KaiB(fs)) when bound to KaiC. KaiB(6):KaiC(6) formation exposes a site for KaiA binding that sequesters KaiA from KaiC, making the KaiC(6):KaiB(6):KaiA(12) complex that results in KaiC autodephosphorylation. Its function is as follows. A metamorphic protein which reversibly switches between an inactive tetrameric fold and a rare, thioredoxin-like monomeric fold (KaiB(fs)). KaiB(fs) binds phospho-KaiC, KaiA and CikA. KaiA and CikA compete for binding to KaiB(fs), and KaiB(fs) and SasA compete for binding to KaiC, thus the clock oscillator and output signal pathway are tightly coupled. In Rippkaea orientalis (strain PCC 8801 / RF-1) (Cyanothece sp. (strain PCC 8801)), this protein is Circadian clock oscillator protein KaiB.